The primary structure comprises 421 residues: Zinc metalloproteinase-disintegrin-like crotastatin (421 aa).

Positions 10-206 (KYVKLFLVAD…NMPQCILKKP (197 aa)) constitute a Peptidase M12B domain. An N-linked (GlcNAc...) asparagine glycan is attached at asparagine 29. 3 disulfides stabilise this stretch: cysteine 121-cysteine 201, cysteine 161-cysteine 185, and cysteine 163-cysteine 168. Residue histidine 146 coordinates Zn(2+). The active site involves glutamate 147. Positions 150 and 156 each coordinate Zn(2+). The Disintegrin domain maps to 214–299 (PAVCGNYFVE…TECTDRFQRN (86 aa)). Residues valine 216, asparagine 219, phenylalanine 221, glutamate 223, glutamate 226, and aspartate 229 each coordinate Ca(2+). 14 cysteine pairs are disulfide-bonded: cysteine 217–cysteine 246, cysteine 228–cysteine 241, cysteine 230–cysteine 236, cysteine 240–cysteine 263, cysteine 254–cysteine 260, cysteine 259–cysteine 285, cysteine 272–cysteine 292, cysteine 279–cysteine 310, cysteine 303–cysteine 315, cysteine 322–cysteine 372, cysteine 337–cysteine 383, cysteine 350–cysteine 360, cysteine 367–cysteine 409, and cysteine 403–cysteine 414. The D/ECD-tripeptide motif lies at 278 to 280 (ECD). Residues aspartate 280, methionine 281, aspartate 283, aspartate 294, and arginine 295 each contribute to the Ca(2+) site.

The protein belongs to the venom metalloproteinase (M12B) family. P-III subfamily. P-IIIc sub-subfamily. In terms of assembly, homodimer; disulfide-linked. It depends on Zn(2+) as a cofactor. As to expression, expressed by the venom gland.

It is found in the secreted. Its function is as follows. Snake venom zinc metalloprotease that induces apoptosis in vascular endothelial cells (VEC), without degrading the extracellular matrix (it cannot cleave collagen) or inhibiting adhesion of VEC. Has also fibrinogenolytic and hemorrhagic activities. The sequence is that of Zinc metalloproteinase-disintegrin-like crotastatin from Crotalus durissus terrificus (South American rattlesnake).